A 101-amino-acid polypeptide reads, in one-letter code: Ubiquitin-related modifier 1 homolog (101 aa).

Residue G101 is modified to 1-thioglycine. G101 participates in a covalent cross-link: Glycyl lysine isopeptide (Gly-Lys) (interchain with K-? in acceptor proteins).

Belongs to the URM1 family. Interacts with cer. In terms of processing, C-terminal thiocarboxylation occurs in 2 steps, it is first acyl-adenylated (-COAMP) via the hesA/moeB/thiF part of the MOCS3 homolog, then thiocarboxylated (-COSH) via the rhodanese domain of the MOCS3 homolog.

The protein resides in the cytoplasm. It participates in tRNA modification; 5-methoxycarbonylmethyl-2-thiouridine-tRNA biosynthesis. Acts as a sulfur carrier required for 2-thiolation of mcm(5)S(2)U at tRNA wobble positions of cytosolic tRNA(Lys), tRNA(Glu) and tRNA(Gln). Serves as sulfur donor in tRNA 2-thiolation reaction by being thiocarboxylated (-COSH) at its C-terminus by MOCS3. The sulfur is then transferred to tRNA to form 2-thiolation of mcm(5)S(2)U. Also acts as a ubiquitin-like protein (UBL) that is covalently conjugated via an isopeptide bond to lysine residues of target proteins such as Prx2/Jafrac1, Ciao1, Eip71CD and GILT1. The thiocarboxylated form serves as substrate for conjugation and oxidative stress specifically induces the formation of UBL-protein conjugates. The protein is Ubiquitin-related modifier 1 homolog of Drosophila simulans (Fruit fly).